A 2512-amino-acid polypeptide reads, in one-letter code: Fatty acid synthase (2512 aa).

An N-acetylglutamate modification is found at Glu2. The region spanning 2–406 (EDVVIAGIAG…GSNAHVILRP (405 aa)) is the Ketosynthase family 3 (KS3) domain. Active-site for beta-ketoacyl synthase activity residues include Cys161, His293, and His331. An acyl and malonyl transferases region spans residues 427-815 (GRTQEAVEIL…GINVLGNNLF (389 aa)). Catalysis depends on Ser580, which acts as the For acyl/malonyl transferase activity. An acyl-CoA contacts are provided by residues 646–647 (DT), Phe670, and Arg772. An N-terminal hotdog fold region spans residues 844–967 (PKAEDFPSGS…ISLLENDALK (124 aa)). The region spanning 844–1111 (PKAEDFPSGS…ASVAPRRQQE (268 aa)) is the PKS/mFAS DH domain. Residue His878 is the Proton acceptor; for dehydratase activity of the active site. The segment at 984–1111 (AKSGLLMEDV…ASVAPRRQQE (128 aa)) is C-terminal hotdog fold. The active-site Proton donor; for dehydratase activity is Asp1034. At Cys1475 the chain carries S-nitrosocysteine. Residues 1638–1866 (WEVPENWTLE…MIKIQEEEKQ (229 aa)) form an enoyl reductase region. 1675–1692 (VLIHSGSGGVGQAAIAIA) contacts NADP(+). An N6-(pyridoxal phosphate)lysine modification is found at Lys1708. A beta-ketoacyl reductase region spans residues 1867–2119 (YPLRSEPVKL…SFVLAEKVSV (253 aa)). Residue 1889–1904 (SYIITGGLGGFGLELA) participates in NADP(+) binding. Cys2093 bears the S-nitrosocysteine mark. The region spanning 2120–2200 (KSEGGSQRDL…ELSSKTGTAE (81 aa)) is the Carrier domain. O-(pantetheine 4'-phosphoryl)serine is present on Ser2158. The tract at residues 2209 to 2511 (KTGPGEPPKL…LAEPRVSVRE (303 aa)) is thioesterase. Residues Ser2309 and His2482 each act as for thioesterase activity in the active site.

Homodimer which is arranged in a head to tail fashion. In terms of processing, S-nitrosylation of Fatty acid synthase at cysteine residues Cys-1475 or Cys-2093 is important for the enzyme dimerization. In adipocytes, S-nitrosylation of Fatty acid synthase occurs under physiological conditions and gradually increases during adipogenesis.

The enzyme catalyses acetyl-CoA + n malonyl-CoA + 2n NADPH + 2n H(+) = a long-chain fatty acid + (n+1) CoA + n CO2 + 2n NADP(+).. It catalyses the reaction holo-[ACP] + acetyl-CoA = acetyl-[ACP] + CoA. It carries out the reaction holo-[ACP] + malonyl-CoA = malonyl-[ACP] + CoA. The catalysed reaction is a fatty acyl-[ACP] + malonyl-[ACP] + H(+) = a 3-oxoacyl-[ACP] + holo-[ACP] + CO2. The enzyme catalyses a (3R)-hydroxyacyl-[ACP] + NADP(+) = a 3-oxoacyl-[ACP] + NADPH + H(+). It catalyses the reaction a (3R)-hydroxyacyl-[ACP] = a (2E)-enoyl-[ACP] + H2O. It carries out the reaction a 2,3-saturated acyl-[ACP] + NADP(+) = a (2E)-enoyl-[ACP] + NADPH + H(+). The catalysed reaction is hexadecanoyl-[ACP] + H2O = hexadecanoate + holo-[ACP] + H(+). The enzyme catalyses acetyl-[ACP] + malonyl-[ACP] + H(+) = 3-oxobutanoyl-[ACP] + holo-[ACP] + CO2. It catalyses the reaction 3-oxobutanoyl-[ACP] + NADPH + H(+) = (3R)-hydroxybutanoyl-[ACP] + NADP(+). It carries out the reaction (3R)-hydroxybutanoyl-[ACP] = (2E)-butenoyl-[ACP] + H2O. The catalysed reaction is (2E)-butenoyl-[ACP] + NADPH + H(+) = butanoyl-[ACP] + NADP(+). The enzyme catalyses butanoyl-[ACP] + malonyl-[ACP] + H(+) = 3-oxohexanoyl-[ACP] + holo-[ACP] + CO2. It catalyses the reaction 3-oxohexanoyl-[ACP] + NADPH + H(+) = (3R)-hydroxyhexanoyl-[ACP] + NADP(+). It carries out the reaction (3R)-hydroxyhexanoyl-[ACP] = (2E)-hexenoyl-[ACP] + H2O. The catalysed reaction is (2E)-hexenoyl-[ACP] + NADPH + H(+) = hexanoyl-[ACP] + NADP(+). The enzyme catalyses hexanoyl-[ACP] + malonyl-[ACP] + H(+) = 3-oxooctanoyl-[ACP] + holo-[ACP] + CO2. It catalyses the reaction 3-oxooctanoyl-[ACP] + NADPH + H(+) = (3R)-hydroxyoctanoyl-[ACP] + NADP(+). It carries out the reaction (3R)-hydroxyoctanoyl-[ACP] = (2E)-octenoyl-[ACP] + H2O. The catalysed reaction is (2E)-octenoyl-[ACP] + NADPH + H(+) = octanoyl-[ACP] + NADP(+). The enzyme catalyses octanoyl-[ACP] + malonyl-[ACP] + H(+) = 3-oxodecanoyl-[ACP] + holo-[ACP] + CO2. It catalyses the reaction 3-oxodecanoyl-[ACP] + NADPH + H(+) = (3R)-hydroxydecanoyl-[ACP] + NADP(+). It carries out the reaction (3R)-hydroxydecanoyl-[ACP] = (2E)-decenoyl-[ACP] + H2O. The catalysed reaction is (2E)-decenoyl-[ACP] + NADPH + H(+) = decanoyl-[ACP] + NADP(+). The enzyme catalyses decanoyl-[ACP] + malonyl-[ACP] + H(+) = 3-oxododecanoyl-[ACP] + holo-[ACP] + CO2. It catalyses the reaction 3-oxododecanoyl-[ACP] + NADPH + H(+) = (3R)-hydroxydodecanoyl-[ACP] + NADP(+). It carries out the reaction (3R)-hydroxydodecanoyl-[ACP] = (2E)-dodecenoyl-[ACP] + H2O. The catalysed reaction is (2E)-dodecenoyl-[ACP] + NADPH + H(+) = dodecanoyl-[ACP] + NADP(+). The enzyme catalyses dodecanoyl-[ACP] + malonyl-[ACP] + H(+) = 3-oxotetradecanoyl-[ACP] + holo-[ACP] + CO2. It catalyses the reaction 3-oxotetradecanoyl-[ACP] + NADPH + H(+) = (3R)-hydroxytetradecanoyl-[ACP] + NADP(+). It carries out the reaction (3R)-hydroxytetradecanoyl-[ACP] = (2E)-tetradecenoyl-[ACP] + H2O. The catalysed reaction is (2E)-tetradecenoyl-[ACP] + NADPH + H(+) = tetradecanoyl-[ACP] + NADP(+). The enzyme catalyses tetradecanoyl-[ACP] + malonyl-[ACP] + H(+) = 3-oxohexadecanoyl-[ACP] + holo-[ACP] + CO2. It catalyses the reaction 3-oxohexadecanoyl-[ACP] + NADPH + H(+) = (3R)-hydroxyhexadecanoyl-[ACP] + NADP(+). It carries out the reaction (3R)-hydroxyhexadecanoyl-[ACP] = (2E)-hexadecenoyl-[ACP] + H2O. The catalysed reaction is (2E)-hexadecenoyl-[ACP] + NADPH + H(+) = hexadecanoyl-[ACP] + NADP(+). The enzyme catalyses hexadecanoyl-[ACP] + malonyl-[ACP] + H(+) = 3-oxooctadecanoyl-[ACP] + holo-[ACP] + CO2. It catalyses the reaction 3-oxooctadecanoyl-[ACP] + NADPH + H(+) = (3R)-hydroxyoctadecanoyl-[ACP] + NADP(+). It carries out the reaction (3R)-hydroxyoctadecanoyl-[ACP] = (2E)-octadecenoyl-[ACP] + H2O. The catalysed reaction is (2E)-octadecenoyl-[ACP] + NADPH + H(+) = octadecanoyl-[ACP] + NADP(+). The enzyme catalyses tetradecanoyl-[ACP] + H2O = tetradecanoate + holo-[ACP] + H(+). It catalyses the reaction octadecanoyl-[ACP] + H2O = octadecanoate + holo-[ACP] + H(+). It participates in lipid metabolism; fatty acid biosynthesis. Cerulenin, a potent non-competitive pharmacological inhibitor of FAS, binds covalently to the active site of the condensing enzyme region, inactivating a key enzyme step in fatty acid synthesis. Functionally, fatty acid synthetase is a multifunctional enzyme that catalyzes the de novo biosynthesis of long-chain saturated fatty acids starting from acetyl-CoA and malonyl-CoA in the presence of NADPH. This multifunctional protein contains 7 catalytic activities and a site for the binding of the prosthetic group 4'-phosphopantetheine of the acyl carrier protein ([ACP]) domain. The protein is Fatty acid synthase (FASN) of Gallus gallus (Chicken).